A 120-amino-acid chain; its full sequence is Large ribosomal subunit protein uL18 (120 aa).

The protein belongs to the universal ribosomal protein uL18 family. In terms of assembly, part of the 50S ribosomal subunit; part of the 5S rRNA/L5/L18/L25 subcomplex. Contacts the 5S and 23S rRNAs.

This is one of the proteins that bind and probably mediate the attachment of the 5S RNA into the large ribosomal subunit, where it forms part of the central protuberance. The polypeptide is Large ribosomal subunit protein uL18 (Staphylococcus haemolyticus (strain JCSC1435)).